A 227-amino-acid polypeptide reads, in one-letter code: Protein MobD (227 aa).

The polypeptide is Protein MobD (mobD) (Acidithiobacillus ferrooxidans (Thiobacillus ferrooxidans)).